The following is a 250-amino-acid chain: UDP-2,3-diacylglucosamine hydrolase (250 aa).

The Mn(2+) site is built by Asp8, His10, Asp41, Asn79, and His115. 79 to 80 (NH) serves as a coordination point for substrate. Residues Asp123, Thr165, Lys168, and His196 each coordinate substrate. Positions 196 and 198 each coordinate Mn(2+).

It belongs to the LpxH family. Requires Mn(2+) as cofactor.

Its subcellular location is the cell inner membrane. The catalysed reaction is UDP-2-N,3-O-bis[(3R)-3-hydroxytetradecanoyl]-alpha-D-glucosamine + H2O = 2-N,3-O-bis[(3R)-3-hydroxytetradecanoyl]-alpha-D-glucosaminyl 1-phosphate + UMP + 2 H(+). Its pathway is glycolipid biosynthesis; lipid IV(A) biosynthesis; lipid IV(A) from (3R)-3-hydroxytetradecanoyl-[acyl-carrier-protein] and UDP-N-acetyl-alpha-D-glucosamine: step 4/6. Its function is as follows. Hydrolyzes the pyrophosphate bond of UDP-2,3-diacylglucosamine to yield 2,3-diacylglucosamine 1-phosphate (lipid X) and UMP by catalyzing the attack of water at the alpha-P atom. Involved in the biosynthesis of lipid A, a phosphorylated glycolipid that anchors the lipopolysaccharide to the outer membrane of the cell. The chain is UDP-2,3-diacylglucosamine hydrolase from Blochmanniella pennsylvanica (strain BPEN).